A 130-amino-acid polypeptide reads, in one-letter code: Succinate dehydrogenase assembly factor 3, mitochondrial (130 aa).

The transit peptide at 1–8 directs the protein to the mitochondrion; sequence MRPSLLRL.

It belongs to the complex I LYR family. SDHAF3 subfamily. As to quaternary structure, interacts with the iron-sulfur protein subunit within the SDH catalytic dimer.

The protein localises to the mitochondrion matrix. Plays an essential role in the assembly of succinate dehydrogenase (SDH), an enzyme complex (also referred to as respiratory complex II) that is a component of both the tricarboxylic acid (TCA) cycle and the mitochondrial electron transport chain, and which couples the oxidation of succinate to fumarate with the reduction of ubiquinone (coenzyme Q) to ubiquinol. Promotes maturation of the iron-sulfur protein subunit of the SDH catalytic dimer, protecting it from the deleterious effects of oxidants. May act together with SDHAF1. This is Succinate dehydrogenase assembly factor 3, mitochondrial from Gibberella zeae (strain ATCC MYA-4620 / CBS 123657 / FGSC 9075 / NRRL 31084 / PH-1) (Wheat head blight fungus).